The following is a 159-amino-acid chain: Endoribonuclease YbeY (159 aa).

The Zn(2+) site is built by His120, His124, and His130.

The protein belongs to the endoribonuclease YbeY family. Zn(2+) serves as cofactor.

It localises to the cytoplasm. Single strand-specific metallo-endoribonuclease involved in late-stage 70S ribosome quality control and in maturation of the 3' terminus of the 16S rRNA. The protein is Endoribonuclease YbeY of Parafrankia sp. (strain EAN1pec).